The following is a 146-amino-acid chain: Neutral phospholipase A2 B (146 aa).

An N-terminal signal peptide occupies residues 1 to 21; sequence MNPAHLLILAAVCVSPLGASS. Residues 22-27 constitute a propeptide that is removed on maturation; it reads NRPMPL. 7 cysteine pairs are disulfide-bonded: cysteine 38/cysteine 98, cysteine 53/cysteine 145, cysteine 55/cysteine 71, cysteine 70/cysteine 126, cysteine 77/cysteine 119, cysteine 87/cysteine 112, and cysteine 105/cysteine 117. 3 residues coordinate Ca(2+): tyrosine 54, glycine 56, and glycine 58. Histidine 74 is a catalytic residue. Aspartate 75 serves as a coordination point for Ca(2+). Aspartate 120 is a catalytic residue.

This sequence belongs to the phospholipase A2 family. Group I subfamily. D49 sub-subfamily. Requires Ca(2+) as cofactor. Expressed by the venom gland.

Its subcellular location is the secreted. The enzyme catalyses a 1,2-diacyl-sn-glycero-3-phosphocholine + H2O = a 1-acyl-sn-glycero-3-phosphocholine + a fatty acid + H(+). Functionally, PLA2 catalyzes the calcium-dependent hydrolysis of the 2-acyl groups in 3-sn-phosphoglycerides. This Naja sputatrix (Malayan spitting cobra) protein is Neutral phospholipase A2 B.